A 122-amino-acid chain; its full sequence is Zein-alpha B49 (122 aa).

This sequence belongs to the zein family.

Its function is as follows. Zeins are major seed storage proteins. This is Zein-alpha B49 from Zea mays (Maize).